Here is a 139-residue protein sequence, read N- to C-terminus: uncharacterized protein (139 aa).

The HTH marR-type domain occupies 8–139; that stretch reads ANLLDHALTK…FLAIIAKLAQ (132 aa). Residues 53–76 constitute a DNA-binding region (H-T-H motif); that stretch reads IKDILKEVTLSPSATTTALNHLEQ.

This is an uncharacterized protein from Bacillus subtilis (strain 168).